We begin with the raw amino-acid sequence, 458 residues long: Nuclear transcription factor Y subunit gamma (458 aa).

Low complexity predominate over residues 305 to 315; sequence QQQFSQFTDGQ. The segment at 305 to 379 is disordered; that stretch reads QQQFSQFTDG…QQSSTSPPPS (75 aa). The segment covering 339 to 351 has biased composition (polar residues); that stretch reads TGNSTPCTSSLPT.

The protein belongs to the NFYC/HAP5 subunit family. In terms of assembly, heterotrimeric transcription factor composed of three components, NF-YA, NF-YB and NF-YC. NF-YB and NF-YC must interact and dimerize for NF-YA association and DNA binding.

It localises to the nucleus. Functionally, component of the sequence-specific heterotrimeric transcription factor (NF-Y) which specifically recognizes a 5'-CCAAT-3' box motif found in the promoters of its target genes. NF-Y can function as both an activator and a repressor, depending on its interacting cofactors. In Homo sapiens (Human), this protein is Nuclear transcription factor Y subunit gamma (NFYC).